The sequence spans 193 residues: DNA damage-inducible transcript 4-like protein (193 aa).

It belongs to the DDIT4 family.

The protein resides in the cytoplasm. In terms of biological role, inhibits cell growth by regulating the TOR signaling pathway upstream of the TSC1-TSC2 complex and downstream of AKT1. In Bos taurus (Bovine), this protein is DNA damage-inducible transcript 4-like protein (DDIT4L).